Here is a 402-residue protein sequence, read N- to C-terminus: Putative F-box protein At3g20030 (402 aa).

The F-box domain maps to Met-1–Ile-56.

In Arabidopsis thaliana (Mouse-ear cress), this protein is Putative F-box protein At3g20030.